The chain runs to 198 residues: Inner membrane-spanning protein YciB (198 aa).

The next 5 helical transmembrane spans lie at 36 to 56 (IYSATAVLIISSVVVYGAIFI), 67 to 87 (LTLVACLVFGSLTLAFHSETF), 90 to 110 (WKAPVVNWLFALAFIGSHFIG), 135 to 155 (VAWIVFFLFCGAANLFVAFTF), and 162 to 182 (FKVFGSLGMTVLFLVAQGIYL).

This sequence belongs to the YciB family.

The protein localises to the cell inner membrane. Its function is as follows. Plays a role in cell envelope biogenesis, maintenance of cell envelope integrity and membrane homeostasis. The polypeptide is Inner membrane-spanning protein YciB (Pseudomonas fluorescens (strain SBW25)).